Here is a 103-residue protein sequence, read N- to C-terminus: MSQENLKIKGGLSEARPATPEIQMIADKVRPLLEEQTNEKYEKFEAVEYKSQVVAGQNLFIKIDVGNGCFLHMKVFRGLSGEDDLKLKGYQTNKTKTDELTSM.

The Secondary area of contact signature appears at 52 to 56 (QVVAG).

The protein belongs to the cystatin family.

It is found in the cytoplasm. In terms of biological role, this is an intracellular thiol proteinase inhibitor. The polypeptide is Stefin-3 (Stfa3) (Mus musculus (Mouse)).